The chain runs to 244 residues: MRDRISAFLEEKQGLSVNSKQSYKYDLEQFLDMVGERISETSLKIYQAQLANLKISAQKRKISACNQFLYFLYQKGEVDSFYRLELAKQAEKKTEKPEILYLDSFWQESDHPEGRLLALLILEMGLLPSEILAIKVADINLDFQVLRISKASQQRIVTIPTALLSELEPLMGQTYLFERGGKPYSRQWAFRQLESFVKEKGFPSLSAQVLREQFILRQIENKVDLYEIAKKLGLKTVLTLEKYR.

Residues 1–73 enclose the Core-binding (CB) domain; that stretch reads MRDRISAFLE…ACNQFLYFLY (73 aa). The Tyr recombinase domain maps to 90–244; the sequence is AEKKTEKPEI…KTVLTLEKYR (155 aa). Residues Lys150 and Arg211 contribute to the active site. Tyr243 acts as the O-(3'-phospho-DNA)-tyrosine intermediate in catalysis.

It belongs to the 'phage' integrase family. XerD-like subfamily.

Its subcellular location is the cytoplasm. Its function is as follows. Putative tyrosine recombinase. Not involved in the cutting and rejoining of the recombining DNA molecules on dif(SL) site. The chain is Tyrosine recombinase XerD-like from Streptococcus pneumoniae (strain CGSP14).